The following is a 465-amino-acid chain: ATP-dependent protease ATPase subunit HslU (465 aa).

Residues Val-20, 62–67, Asp-277, Glu-343, and Arg-415 contribute to the ATP site; that span reads GVGKTE.

The protein belongs to the ClpX chaperone family. HslU subfamily. A double ring-shaped homohexamer of HslV is capped on each side by a ring-shaped HslU homohexamer. The assembly of the HslU/HslV complex is dependent on binding of ATP.

It localises to the cytoplasm. In terms of biological role, ATPase subunit of a proteasome-like degradation complex; this subunit has chaperone activity. The binding of ATP and its subsequent hydrolysis by HslU are essential for unfolding of protein substrates subsequently hydrolyzed by HslV. HslU recognizes the N-terminal part of its protein substrates and unfolds these before they are guided to HslV for hydrolysis. This is ATP-dependent protease ATPase subunit HslU from Geobacillus kaustophilus (strain HTA426).